The following is a 356-amino-acid chain: Aminodeoxyfutalosine deaminase (356 aa).

Zn(2+) contacts are provided by His-18 and His-20. Substrate-binding residues include Arg-73, Glu-140, and Gly-172. His-199 contributes to the Zn(2+) binding site. Residue Glu-202 is the Proton donor of the active site. Asp-287 contributes to the Zn(2+) binding site.

It belongs to the metallo-dependent hydrolases superfamily. Adenosine and AMP deaminases family. Zn(2+) serves as cofactor.

It catalyses the reaction 6-amino-6-deoxyfutalosine + H2O + H(+) = futalosine + NH4(+). It functions in the pathway quinol/quinone metabolism; menaquinone biosynthesis. In terms of biological role, catalyzes the deamination of aminodeoxyfutalosine (AFL) into futalosine (FL), a step in the biosynthesis of menaquinone (MK, vitamin K2). Is very poorly efficient on 1-(6-amino-9H-purin-9-yl)-1-deoxy-N-ethyl-beta-D-ribofuranuronamide (NECA), adenosine, 5'-methylthioadenosine, 5'-deoxyadenosine, 2'-deoxyadenosine, and AMP as substrate. The sequence is that of Aminodeoxyfutalosine deaminase from Acidothermus cellulolyticus (strain ATCC 43068 / DSM 8971 / 11B).